We begin with the raw amino-acid sequence, 384 residues long: UPF0284 protein alr0297 (384 aa).

The protein belongs to the UPF0284 family.

The chain is UPF0284 protein alr0297 from Nostoc sp. (strain PCC 7120 / SAG 25.82 / UTEX 2576).